The following is a 92-amino-acid chain: Small ribosomal subunit protein uS19c (92 aa).

Belongs to the universal ribosomal protein uS19 family.

Its subcellular location is the plastid. Functionally, protein S19 forms a complex with S13 that binds strongly to the 16S ribosomal RNA. The polypeptide is Small ribosomal subunit protein uS19c (Aneura mirabilis (Parasitic liverwort)).